A 340-amino-acid polypeptide reads, in one-letter code: tRNA dimethylallyltransferase (340 aa).

The disordered stretch occupies residues 1–25; the sequence is MDQNRSPNGRDCREPPSPSSTARPG. ATP is bound at residue 31 to 38; the sequence is GPTATGKS. 33 to 38 contributes to the substrate binding site; sequence TATGKS. The segment at 56–59 is interaction with substrate tRNA; sequence DSRQ.

Belongs to the IPP transferase family. In terms of assembly, monomer. The cofactor is Mg(2+).

It carries out the reaction adenosine(37) in tRNA + dimethylallyl diphosphate = N(6)-dimethylallyladenosine(37) in tRNA + diphosphate. Its function is as follows. Catalyzes the transfer of a dimethylallyl group onto the adenine at position 37 in tRNAs that read codons beginning with uridine, leading to the formation of N6-(dimethylallyl)adenosine (i(6)A). The chain is tRNA dimethylallyltransferase from Synechococcus sp. (strain JA-3-3Ab) (Cyanobacteria bacterium Yellowstone A-Prime).